A 386-amino-acid polypeptide reads, in one-letter code: Ferrochelatase (386 aa).

His-196 and Glu-277 together coordinate Fe cation.

The protein belongs to the ferrochelatase family.

Its subcellular location is the cytoplasm. It carries out the reaction heme b + 2 H(+) = protoporphyrin IX + Fe(2+). Its pathway is porphyrin-containing compound metabolism; protoheme biosynthesis; protoheme from protoporphyrin-IX: step 1/1. Functionally, catalyzes the ferrous insertion into protoporphyrin IX. In Picosynechococcus sp. (strain ATCC 27264 / PCC 7002 / PR-6) (Agmenellum quadruplicatum), this protein is Ferrochelatase.